Consider the following 95-residue polypeptide: MAQIVKATEAVRSFSDIINRVYYKGESFDIQKGNNIVAQITPVENKSSVKVKNLDELFKNGPHLDPEDAEQFMKDVDDVRRSTRINIEELYRKWD.

Its function is as follows. Antitoxin component of a type II toxin-antitoxin (TA) system. Partially neutralizes the RNase activity of cognate toxin VapC. The chain is Antitoxin VapB from Rickettsia bellii (strain RML369-C).